The primary structure comprises 509 residues: Maturase K (509 aa).

Belongs to the intron maturase 2 family. MatK subfamily.

Its subcellular location is the plastid. The protein resides in the chloroplast. Usually encoded in the trnK tRNA gene intron. Probably assists in splicing its own and other chloroplast group II introns. The chain is Maturase K from Clematis florida (Asian virgin's bower).